We begin with the raw amino-acid sequence, 229 residues long: 7-cyano-7-deazaguanine synthase (229 aa).

ATP is bound at residue 8 to 18; that stretch reads FSGGQDSTTCL. Residues Cys187, Cys196, Cys199, and Cys202 each contribute to the Zn(2+) site.

This sequence belongs to the QueC family. The cofactor is Zn(2+).

It carries out the reaction 7-carboxy-7-deazaguanine + NH4(+) + ATP = 7-cyano-7-deazaguanine + ADP + phosphate + H2O + H(+). The protein operates within purine metabolism; 7-cyano-7-deazaguanine biosynthesis. Functionally, catalyzes the ATP-dependent conversion of 7-carboxy-7-deazaguanine (CDG) to 7-cyano-7-deazaguanine (preQ(0)). This is 7-cyano-7-deazaguanine synthase from Shewanella halifaxensis (strain HAW-EB4).